The chain runs to 306 residues: Ribosomal protein L11 methyltransferase (306 aa).

Residues T154, G179, D201, and N242 each contribute to the S-adenosyl-L-methionine site.

Belongs to the methyltransferase superfamily. PrmA family.

The protein localises to the cytoplasm. The enzyme catalyses L-lysyl-[protein] + 3 S-adenosyl-L-methionine = N(6),N(6),N(6)-trimethyl-L-lysyl-[protein] + 3 S-adenosyl-L-homocysteine + 3 H(+). Methylates ribosomal protein L11. In Xanthomonas campestris pv. campestris (strain 8004), this protein is Ribosomal protein L11 methyltransferase.